A 279-amino-acid chain; its full sequence is Large ribosomal subunit protein uL2 (279 aa).

Disordered stretches follow at residues 30–59 (EKSL…GGHK) and 225–279 (VMNP…KNKR). A compositionally biased stretch (basic residues) spans 50–59 (TTRHKGGGHK). A compositionally biased stretch (basic and acidic residues) spans 253 to 268 (PEGRTRRPNKESDKLI). Residues 269 to 279 (VRRRRTGKNKR) are compositionally biased toward basic residues.

Belongs to the universal ribosomal protein uL2 family. In terms of assembly, part of the 50S ribosomal subunit. Forms a bridge to the 30S subunit in the 70S ribosome.

Functionally, one of the primary rRNA binding proteins. Required for association of the 30S and 50S subunits to form the 70S ribosome, for tRNA binding and peptide bond formation. It has been suggested to have peptidyltransferase activity; this is somewhat controversial. Makes several contacts with the 16S rRNA in the 70S ribosome. The chain is Large ribosomal subunit protein uL2 from Kocuria rhizophila (strain ATCC 9341 / DSM 348 / NBRC 103217 / DC2201).